The following is an 84-amino-acid chain: Cytoplasmic envelopment protein 3 (84 aa).

The N-myristoyl glycine; by host moiety is linked to residue glycine 2. The tract at residues aspartate 40 to cysteine 46 is asp/Glu-rich (acidic).

This sequence belongs to the herpesviridae cytoplasmic envelopment protein 3 family. Interacts with cytoplasmic envelopment protein 2; this interaction is essential for the proper localization of each protein to the assembly complex and thus for the production of infectious virus. Myristoylation and palmitoylation (probably on one or more of the nearby cysteines at the N-terminus) enable membrane-binding and Golgi apparatus-specific targeting and are essential for efficient packaging. Post-translationally, phosphorylated. Phosphorylation does not seem to be required for recycling to the host Golgi apparatus. Packaging is selective for underphosphorylated forms.

The protein localises to the virion tegument. It is found in the virion membrane. The protein resides in the host cell membrane. It localises to the host Golgi apparatus membrane. Its function is as follows. Plays an important role in the cytoplasmic envelopment of tegument proteins and capsids during the assembly and egress processes. Also participates in viral entry at the fusion step probably by regulating the core fusion machinery. This is Cytoplasmic envelopment protein 3 (MDV023) from Gallus gallus (Chicken).